Consider the following 500-residue polypeptide: Replication factor C large subunit (500 aa).

44–51 (GSPGVGKT) contacts ATP. A disordered region spans residues 443–500 (HAADDLGASDGETTNASGTASSSGDDGDADGTTDGDGSDANDGNDDDDDGQAGLSDFV). The span at 455–466 (TTNASGTASSSG) shows a compositional bias: low complexity. Positions 467-492 (DDGDADGTTDGDGSDANDGNDDDDDG) are enriched in acidic residues.

It belongs to the activator 1 small subunits family. RfcL subfamily. As to quaternary structure, heteromultimer composed of small subunits (RfcS) and large subunits (RfcL).

Part of the RFC clamp loader complex which loads the PCNA sliding clamp onto DNA. The sequence is that of Replication factor C large subunit from Halorubrum lacusprofundi (strain ATCC 49239 / DSM 5036 / JCM 8891 / ACAM 34).